We begin with the raw amino-acid sequence, 266 residues long: Prolactin-7A1 (266 aa).

The N-terminal stretch at Met1–Cys30 is a signal peptide. Asn36, Asn58, Asn110, Asn149, and Asn157 each carry an N-linked (GlcNAc...) asparagine glycan. 2 disulfides stabilise this stretch: Cys114–Cys231 and Cys248–Cys257.

Belongs to the somatotropin/prolactin family. In terms of tissue distribution, expressed specifically in the placenta. Detected only in the trophoblast giant cells.

The protein resides in the secreted. The chain is Prolactin-7A1 (Prl7a1) from Mus musculus (Mouse).